A 622-amino-acid polypeptide reads, in one-letter code: 1,4-alpha-glucan branching enzyme GlgB (622 aa).

The active-site Nucleophile is Asp306. Catalysis depends on Glu358, which acts as the Proton donor. A disordered region spans residues Tyr581–Leu606.

It belongs to the glycosyl hydrolase 13 family. GlgB subfamily. Monomer.

It catalyses the reaction Transfers a segment of a (1-&gt;4)-alpha-D-glucan chain to a primary hydroxy group in a similar glucan chain.. It participates in glycan biosynthesis; glycogen biosynthesis. Functionally, catalyzes the formation of the alpha-1,6-glucosidic linkages in glycogen by scission of a 1,4-alpha-linked oligosaccharide from growing alpha-1,4-glucan chains and the subsequent attachment of the oligosaccharide to the alpha-1,6 position. This is 1,4-alpha-glucan branching enzyme GlgB from Salinibacter ruber (strain DSM 13855 / M31).